The following is an 88-amino-acid chain: Small ribosomal subunit protein bS20 (88 aa).

A disordered region spans residues 1–27 (MANSKSAKKRALQSEKRRQHNASRRSM).

Belongs to the bacterial ribosomal protein bS20 family.

In terms of biological role, binds directly to 16S ribosomal RNA. This is Small ribosomal subunit protein bS20 from Shewanella loihica (strain ATCC BAA-1088 / PV-4).